The chain runs to 242 residues: 1-(5-phosphoribosyl)-5-[(5-phosphoribosylamino)methylideneamino] imidazole-4-carboxamide isomerase (242 aa).

Residue Asp10 is the Proton acceptor of the active site. The active-site Proton donor is the Asp132.

It belongs to the HisA/HisF family.

It is found in the cytoplasm. The catalysed reaction is 1-(5-phospho-beta-D-ribosyl)-5-[(5-phospho-beta-D-ribosylamino)methylideneamino]imidazole-4-carboxamide = 5-[(5-phospho-1-deoxy-D-ribulos-1-ylimino)methylamino]-1-(5-phospho-beta-D-ribosyl)imidazole-4-carboxamide. The protein operates within amino-acid biosynthesis; L-histidine biosynthesis; L-histidine from 5-phospho-alpha-D-ribose 1-diphosphate: step 4/9. This is 1-(5-phosphoribosyl)-5-[(5-phosphoribosylamino)methylideneamino] imidazole-4-carboxamide isomerase from Methanothrix thermoacetophila (strain DSM 6194 / JCM 14653 / NBRC 101360 / PT) (Methanosaeta thermophila).